The following is a 265-amino-acid chain: Tryptophan synthase alpha chain (265 aa).

Catalysis depends on proton acceptor residues Glu49 and Asp60.

The protein belongs to the TrpA family. Tetramer of two alpha and two beta chains.

It catalyses the reaction (1S,2R)-1-C-(indol-3-yl)glycerol 3-phosphate + L-serine = D-glyceraldehyde 3-phosphate + L-tryptophan + H2O. It functions in the pathway amino-acid biosynthesis; L-tryptophan biosynthesis; L-tryptophan from chorismate: step 5/5. The alpha subunit is responsible for the aldol cleavage of indoleglycerol phosphate to indole and glyceraldehyde 3-phosphate. The protein is Tryptophan synthase alpha chain of Desulfatibacillum aliphaticivorans.